The chain runs to 716 residues: DNA ligase (716 aa).

NAD(+) contacts are provided by residues 49–53 (DAEYD), 98–99 (SL), and E131. K133 acts as the N6-AMP-lysine intermediate in catalysis. 4 residues coordinate NAD(+): R154, E191, K308, and K332. Zn(2+) contacts are provided by C437, C439, C461, and C467. The 79-residue stretch at 638–716 (KRHSPIATKT…EDEWLQLIAE (79 aa)) folds into the BRCT domain.

Belongs to the NAD-dependent DNA ligase family. LigA subfamily. Requires Mg(2+) as cofactor. The cofactor is Mn(2+).

It catalyses the reaction NAD(+) + (deoxyribonucleotide)n-3'-hydroxyl + 5'-phospho-(deoxyribonucleotide)m = (deoxyribonucleotide)n+m + AMP + beta-nicotinamide D-nucleotide.. Functionally, DNA ligase that catalyzes the formation of phosphodiester linkages between 5'-phosphoryl and 3'-hydroxyl groups in double-stranded DNA using NAD as a coenzyme and as the energy source for the reaction. It is essential for DNA replication and repair of damaged DNA. This Bradyrhizobium sp. (strain BTAi1 / ATCC BAA-1182) protein is DNA ligase.